Reading from the N-terminus, the 476-residue chain is Glycogen synthase (476 aa).

Residue lysine 15 participates in ADP-alpha-D-glucose binding.

Belongs to the glycosyltransferase 1 family. Bacterial/plant glycogen synthase subfamily.

The enzyme catalyses [(1-&gt;4)-alpha-D-glucosyl](n) + ADP-alpha-D-glucose = [(1-&gt;4)-alpha-D-glucosyl](n+1) + ADP + H(+). It participates in glycan biosynthesis; glycogen biosynthesis. Its function is as follows. Synthesizes alpha-1,4-glucan chains using ADP-glucose. The sequence is that of Glycogen synthase from Bacillus cereus (strain B4264).